The following is a 183-amino-acid chain: Protein US32 (183 aa).

The protein belongs to the herpesviridae US1 family.

The protein is Protein US32 (US32) of Homo sapiens (Human).